We begin with the raw amino-acid sequence, 154 residues long: Crossover junction endodeoxyribonuclease RuvC (154 aa).

Catalysis depends on residues D7, E67, and D139. Mg(2+) contacts are provided by D7, E67, and D139.

This sequence belongs to the RuvC family. In terms of assembly, homodimer which binds Holliday junction (HJ) DNA. The HJ becomes 2-fold symmetrical on binding to RuvC with unstacked arms; it has a different conformation from HJ DNA in complex with RuvA. In the full resolvosome a probable DNA-RuvA(4)-RuvB(12)-RuvC(2) complex forms which resolves the HJ. It depends on Mg(2+) as a cofactor.

It localises to the cytoplasm. It carries out the reaction Endonucleolytic cleavage at a junction such as a reciprocal single-stranded crossover between two homologous DNA duplexes (Holliday junction).. Its function is as follows. The RuvA-RuvB-RuvC complex processes Holliday junction (HJ) DNA during genetic recombination and DNA repair. Endonuclease that resolves HJ intermediates. Cleaves cruciform DNA by making single-stranded nicks across the HJ at symmetrical positions within the homologous arms, yielding a 5'-phosphate and a 3'-hydroxyl group; requires a central core of homology in the junction. The consensus cleavage sequence is 5'-(A/T)TT(C/G)-3'. Cleavage occurs on the 3'-side of the TT dinucleotide at the point of strand exchange. HJ branch migration catalyzed by RuvA-RuvB allows RuvC to scan DNA until it finds its consensus sequence, where it cleaves and resolves the cruciform DNA. The chain is Crossover junction endodeoxyribonuclease RuvC from Synechococcus sp. (strain CC9605).